The sequence spans 268 residues: tRNA pseudouridine synthase A (268 aa).

The Nucleophile role is filled by Asp52. Substrate is bound at residue Tyr113.

It belongs to the tRNA pseudouridine synthase TruA family. As to quaternary structure, homodimer.

It carries out the reaction uridine(38/39/40) in tRNA = pseudouridine(38/39/40) in tRNA. In terms of biological role, formation of pseudouridine at positions 38, 39 and 40 in the anticodon stem and loop of transfer RNAs. The chain is tRNA pseudouridine synthase A from Chlamydia abortus (strain DSM 27085 / S26/3) (Chlamydophila abortus).